A 456-amino-acid chain; its full sequence is Bifunctional protein GlmU (456 aa).

Residues 1 to 227 are pyrophosphorylase; sequence MKLRVVILAA…AQEVEGANNR (227 aa). UDP-N-acetyl-alpha-D-glucosamine-binding positions include 8 to 11, Lys22, Gln73, 78 to 79, 100 to 102, Gly137, Glu152, Asn167, and Asn225; these read LAAG, GT, and YGD. Asp102 is a Mg(2+) binding site. A Mg(2+)-binding site is contributed by Asn225. Residues 228 to 248 form a linker region; sequence QQLASLERALQQRQAEELMTQ. Residues 249–456 form an N-acetyltransferase region; sequence GVTLIDPARF…WQRPQSKKGT (208 aa). UDP-N-acetyl-alpha-D-glucosamine contacts are provided by Arg331 and Lys349. His361 (proton acceptor) is an active-site residue. 2 residues coordinate UDP-N-acetyl-alpha-D-glucosamine: Tyr364 and Asn375. Residues Ala378, 384-385, Ser403, Ala421, and Arg438 contribute to the acetyl-CoA site; that span reads NY.

In the N-terminal section; belongs to the N-acetylglucosamine-1-phosphate uridyltransferase family. This sequence in the C-terminal section; belongs to the transferase hexapeptide repeat family. Homotrimer. Mg(2+) serves as cofactor.

The protein resides in the cytoplasm. The enzyme catalyses alpha-D-glucosamine 1-phosphate + acetyl-CoA = N-acetyl-alpha-D-glucosamine 1-phosphate + CoA + H(+). The catalysed reaction is N-acetyl-alpha-D-glucosamine 1-phosphate + UTP + H(+) = UDP-N-acetyl-alpha-D-glucosamine + diphosphate. Its pathway is nucleotide-sugar biosynthesis; UDP-N-acetyl-alpha-D-glucosamine biosynthesis; N-acetyl-alpha-D-glucosamine 1-phosphate from alpha-D-glucosamine 6-phosphate (route II): step 2/2. It functions in the pathway nucleotide-sugar biosynthesis; UDP-N-acetyl-alpha-D-glucosamine biosynthesis; UDP-N-acetyl-alpha-D-glucosamine from N-acetyl-alpha-D-glucosamine 1-phosphate: step 1/1. The protein operates within bacterial outer membrane biogenesis; LPS lipid A biosynthesis. Its function is as follows. Catalyzes the last two sequential reactions in the de novo biosynthetic pathway for UDP-N-acetylglucosamine (UDP-GlcNAc). The C-terminal domain catalyzes the transfer of acetyl group from acetyl coenzyme A to glucosamine-1-phosphate (GlcN-1-P) to produce N-acetylglucosamine-1-phosphate (GlcNAc-1-P), which is converted into UDP-GlcNAc by the transfer of uridine 5-monophosphate (from uridine 5-triphosphate), a reaction catalyzed by the N-terminal domain. This Idiomarina loihiensis (strain ATCC BAA-735 / DSM 15497 / L2-TR) protein is Bifunctional protein GlmU.